A 487-amino-acid polypeptide reads, in one-letter code: Protein DETOXIFICATION 11 (487 aa).

The next 12 helical transmembrane spans lie at 35–55, 73–93, 122–142, 151–171, 184–204, 211–231, 264–284, 293–313, 330–350, 377–397, 412–432, and 435–455; these read LICF…LQII, FAIS…SCAL, LVCL…VILG, AGRF…LQPL, LLIT…LLVY, IGGA…LGSF, AAML…SGLL, VLSV…AIAA, AAHI…LMVG, MAPL…LSGV, FGAF…WVHL, and VGLW…LALV.

This sequence belongs to the multi antimicrobial extrusion (MATE) (TC 2.A.66.1) family.

Its subcellular location is the membrane. This Arabidopsis thaliana (Mouse-ear cress) protein is Protein DETOXIFICATION 11.